The chain runs to 297 residues: UDP-3-O-acyl-N-acetylglucosamine deacetylase (297 aa).

Positions 77, 236, and 240 each coordinate Zn(2+). The Proton donor role is filled by His-263.

This sequence belongs to the LpxC family. It depends on Zn(2+) as a cofactor.

The enzyme catalyses a UDP-3-O-[(3R)-3-hydroxyacyl]-N-acetyl-alpha-D-glucosamine + H2O = a UDP-3-O-[(3R)-3-hydroxyacyl]-alpha-D-glucosamine + acetate. The protein operates within glycolipid biosynthesis; lipid IV(A) biosynthesis; lipid IV(A) from (3R)-3-hydroxytetradecanoyl-[acyl-carrier-protein] and UDP-N-acetyl-alpha-D-glucosamine: step 2/6. Its function is as follows. Catalyzes the hydrolysis of UDP-3-O-myristoyl-N-acetylglucosamine to form UDP-3-O-myristoylglucosamine and acetate, the committed step in lipid A biosynthesis. The polypeptide is UDP-3-O-acyl-N-acetylglucosamine deacetylase (Psychrobacter sp. (strain PRwf-1)).